A 474-amino-acid polypeptide reads, in one-letter code: Semenogelin-2 (474 aa).

The first 23 residues, 1 to 23 (MKSIILFVLSLLLILEKQAAVMG), serve as a signal peptide directing secretion. 5 disordered regions span residues 24–62 (QKGGSKGQLPSGSSQFPHGQKGQHYFGQKDQQHTKSKGS), 132–158 (GGQAHRGTQNPSQDQGNSPSGKGLSSQ), 173–194 (KEQASASGAQKGRTQGGSQSSY), 226–247 (VREEHSSKLQTSLHPAHQDRLQ), and 272–474 (NLNQ…SSTE). Composition is skewed to polar residues over residues 31-40 (QLPSGSSQFP), 137-158 (RGTQNPSQDQGNSPSGKGLSSQ), and 174-194 (EQASASGAQKGRTQGGSQSSY). Over residues 292–310 (RTEERQLNHGEKSVQKDVS) the composition is skewed to basic and acidic residues. Residues 325–334 (KSQNQVTIHS) are compositionally biased toward polar residues. Over residues 335–346 (QDQEHGHKENKM) the composition is skewed to basic and acidic residues. Positions 372–397 (GSISIQTEEQIHGKSQNQVRIPSQAQ) are enriched in polar residues. Residues 399 to 426 (YGHKENKISYRSSSTEERRLNSGEKDVQ) show a composition bias toward basic and acidic residues. A compositionally biased stretch (polar residues) spans 445–455 (KSQNQVTIPSQ). Positions 456-465 (DQEHGHKENK) are enriched in basic and acidic residues.

Belongs to the semenogelin family. Interacts with SERPINA5.

It is found in the secreted. In terms of biological role, participates in the formation of a gel matrix (sperm coagulum) entrapping the accessory gland secretions and ejaculated spermatozoa. This Gorilla gorilla gorilla (Western lowland gorilla) protein is Semenogelin-2 (SEMG2).